A 1128-amino-acid polypeptide reads, in one-letter code: Translation initiation factor IF-2 (1128 aa).

The tract at residues 57 to 519 (NSDKQILSIN…KETTRQRQKR (463 aa)) is disordered. Residues 70-83 (NKKDNYKQNKEDKS) show a composition bias toward basic and acidic residues. Low complexity predominate over residues 100 to 110 (KKQLLNKPLNK). The segment covering 120–146 (QLKNPNKPNIYNSSQSQANLTNQNTKS) has biased composition (polar residues). Over residues 147-158 (KPSEHFNKDKKT) the composition is skewed to basic and acidic residues. Low complexity predominate over residues 182–196 (KNINNNLKSNESSKN). Basic and acidic residues predominate over residues 201–214 (GDKRELSLKPDQNR). 2 stretches are compositionally biased toward polar residues: residues 243-267 (KQNN…NRPG) and 386-397 (AKTNNQKQNIES). Residues 432-445 (RKDWDDSAKLEALR) are compositionally biased toward basic and acidic residues. Residues 499-519 (HKSTKQFKKKKKETTRQRQKR) are compositionally biased toward basic residues. Residues 620-792 (KRPPVITVMG…ILLVSEVEDL (173 aa)) enclose the tr-type G domain. A G1 region spans residues 629–636 (GHVDHGKT). 629-636 (GHVDHGKT) lines the GTP pocket. A G2 region spans residues 654 to 658 (GITQH). The tract at residues 679 to 682 (DTPG) is G3. GTP-binding positions include 679–683 (DTPGH) and 733–736 (NKID). The G4 stretch occupies residues 733–736 (NKID). The tract at residues 769 to 771 (SAI) is G5.

It belongs to the TRAFAC class translation factor GTPase superfamily. Classic translation factor GTPase family. IF-2 subfamily.

The protein localises to the cytoplasm. One of the essential components for the initiation of protein synthesis. Protects formylmethionyl-tRNA from spontaneous hydrolysis and promotes its binding to the 30S ribosomal subunits. Also involved in the hydrolysis of GTP during the formation of the 70S ribosomal complex. The sequence is that of Translation initiation factor IF-2 from Prochlorococcus marinus (strain MIT 9312).